The primary structure comprises 257 residues: Ribonuclease HII (257 aa).

Positions 72-257 constitute an RNase H type-2 domain; that stretch reads TYIAGIDEVG…FAPIKDMIQK (186 aa). The a divalent metal cation site is built by Asp-78, Glu-79, and Asp-170.

This sequence belongs to the RNase HII family. Mn(2+) is required as a cofactor. It depends on Mg(2+) as a cofactor.

It is found in the cytoplasm. It carries out the reaction Endonucleolytic cleavage to 5'-phosphomonoester.. In terms of biological role, endonuclease that specifically degrades the RNA of RNA-DNA hybrids. The sequence is that of Ribonuclease HII from Bacillus thuringiensis (strain Al Hakam).